The chain runs to 390 residues: Galactokinase (390 aa).

33-36 (EHTD) is a binding site for substrate. ATP is bound by residues Ser-67 and 124–130 (GSGLSSS). Residues Ser-130 and Glu-162 each coordinate Mg(2+). Catalysis depends on Asp-174, which acts as the Proton acceptor. Substrate is bound at residue Tyr-224.

It belongs to the GHMP kinase family. GalK subfamily.

It is found in the cytoplasm. It catalyses the reaction alpha-D-galactose + ATP = alpha-D-galactose 1-phosphate + ADP + H(+). It participates in carbohydrate metabolism; galactose metabolism. Its function is as follows. Catalyzes the transfer of the gamma-phosphate of ATP to D-galactose to form alpha-D-galactose-1-phosphate (Gal-1-P). The chain is Galactokinase from Streptococcus suis (strain 05ZYH33).